A 396-amino-acid polypeptide reads, in one-letter code: Stearoyl-[acyl-carrier-protein] 9-desaturase 5, chloroplastic (396 aa).

Residues 1 to 29 (MAMAMDRIVFSPSSYVYRPCQARGSRSSR) constitute a chloroplast transit peptide. E137, E175, H178, E228, E261, and H264 together coordinate Fe cation.

It belongs to the fatty acid desaturase type 2 family. Homodimer. It depends on Fe(2+) as a cofactor. In terms of tissue distribution, ubiquitously expressed with a preference in leaves, flowers and stems.

It localises to the plastid. The protein resides in the chloroplast stroma. It catalyses the reaction octadecanoyl-[ACP] + 2 reduced [2Fe-2S]-[ferredoxin] + O2 + 2 H(+) = (9Z)-octadecenoyl-[ACP] + 2 oxidized [2Fe-2S]-[ferredoxin] + 2 H2O. It functions in the pathway lipid metabolism; fatty acid metabolism. Its function is as follows. Converts stearoyl-ACP to oleoyl-ACP by introduction of a cis double bond between carbons 9 and 10 of the acyl chain. The sequence is that of Stearoyl-[acyl-carrier-protein] 9-desaturase 5, chloroplastic (S-ACP-DES5) from Arabidopsis thaliana (Mouse-ear cress).